The primary structure comprises 205 residues: Large ribosomal subunit protein uL3 (205 aa).

It belongs to the universal ribosomal protein uL3 family. As to quaternary structure, part of the 50S ribosomal subunit. Forms a cluster with proteins L14 and L19.

Functionally, one of the primary rRNA binding proteins, it binds directly near the 3'-end of the 23S rRNA, where it nucleates assembly of the 50S subunit. This chain is Large ribosomal subunit protein uL3, found in Thermosipho melanesiensis (strain DSM 12029 / CIP 104789 / BI429).